The sequence spans 561 residues: Putative transport protein YbjL (561 aa).

The next 5 helical transmembrane spans lie at 8-28, 32-52, 66-86, 94-114, and 158-178; these read LLNGNYILLLFVVLTLGLCLG, LGSIQLGNSIGVLVVSLLLGQ, FMLFIFCVGVEAGPNFFSIFF, MLALVMVGSALVIALGLGKLF, and NLSLGYALTYLIGLVSLIVGA. 2 RCK C-terminal domains span residues 200-288 and 292-373; these read RGLD…SFRN and VFDR…RIGF. The next 5 membrane-spanning stretches (helical) occupy residues 383–403, 406–426, 451–471, 475–495, and 540–560; these read LLAFCAFFVIGLMIGMITFQF, FSFGMGNAAGLLFAGIMLGFM, VFMAGVGLSAGSGINNGLGAI, MLIAGLIVSLVPVVICFLFGA, and AIANVLLTLAGTIIVMVWPGL.

It belongs to the AAE transporter (TC 2.A.81) family. YbjL subfamily.

Its subcellular location is the cell membrane. In Shigella sonnei (strain Ss046), this protein is Putative transport protein YbjL.